The chain runs to 25 residues: Bioremediase (25 aa).

Residues Asp1–Ala25 enclose the Alpha-carbonic anhydrase domain. The interval Asp1–Ala25 is disordered.

Belongs to the alpha-carbonic anhydrase family. Zn(2+) serves as cofactor.

Functionally, releases silica from silica-rich substances. The polypeptide is Bioremediase (Thermoanaerobacter sp).